Reading from the N-terminus, the 168-residue chain is Quinol oxidase subunit 2 (168 aa).

The helical transmembrane segment at 9–31 threads the bilayer; that stretch reads EVWFIVMLVLVLIFFSWNVYYLS.

The protein belongs to the cytochrome c oxidase subunit 2 family.

The protein resides in the cell membrane. It carries out the reaction 2 a quinol + O2 = 2 a quinone + 2 H2O. Functionally, the terminal oxidase is the component of the respiratory chain that catalyzes the reduction of oxygen to water. Subunits 1-3 form the functional core of the enzyme complex. Its function is as follows. Subunit 2 transfers the electrons from caldariella quinol to the bimetallic center of the catalytic subunit 1 that is formed by heme A3 and Cu(B). This is Quinol oxidase subunit 2 (soxA) from Sulfolobus acidocaldarius (strain ATCC 33909 / DSM 639 / JCM 8929 / NBRC 15157 / NCIMB 11770).